The primary structure comprises 230 residues: Probable tetraspanin tspD (230 aa).

The Cytoplasmic segment spans residues 1–20 (MVEYLPSTPRYLKVPLIILN). The chain crosses the membrane as a helical span at residues 21–41 (VILWLLGLVLVIIGGICVGFF). Over 42–65 (SRFKELQEVGGVSESIKSISVSLP) the chain is Extracellular. Residues 66–86 (AGVLSIGIFFMVLTVAGCIVA) traverse the membrane as a helical segment. Over 87–90 (YKEK) the chain is Cytoplasmic. A helical membrane pass occupies residues 91 to 111 (MVGLVFYTILMLVLLVVLIGI). Over 112–200 (GGEALTYHNA…VNSKLYLVGS (89 aa)) the chain is Extracellular. N-linked (GlcNAc...) asparagine glycans are attached at residues N133, N138, N163, and N179. A helical transmembrane segment spans residues 201–221 (AGVAIGVIELVSLMFALFLIV). Residues 222-230 (RLYKSNSYR) are Cytoplasmic-facing.

It belongs to the tetraspanin (TM4SF) family.

It localises to the membrane. This is Probable tetraspanin tspD (tspD) from Dictyostelium discoideum (Social amoeba).